We begin with the raw amino-acid sequence, 1887 residues long: Protein TIC 214 (1887 aa).

6 helical membrane passes run 18-38, 64-84, 87-107, 124-144, 172-192, and 221-241; these read IINS…FSIG, FITG…HLAL, PHTI…WNNH, LSIQ…HFIL, VGWL…LVWI, and IFSI…PSPI. 3 disordered regions span residues 248-300, 785-805, and 1569-1603; these read EASK…EGWD, REEQ…DNKR, and LPSN…NLSP. Residues 256–268 are compositionally biased toward acidic residues; sequence VESEEERDVEIET. A compositionally biased stretch (basic and acidic residues) spans 1578 to 1597; sequence RSQETKEPPSQRERGSDIEN.

Belongs to the TIC214 family. Part of the Tic complex.

The protein localises to the plastid. The protein resides in the chloroplast inner membrane. Involved in protein precursor import into chloroplasts. May be part of an intermediate translocation complex acting as a protein-conducting channel at the inner envelope. The chain is Protein TIC 214 from Solanum tuberosum (Potato).